We begin with the raw amino-acid sequence, 246 residues long: tRNA (guanine-N(1)-)-methyltransferase (246 aa).

Residues Gly113 and 132–137 (LGDFVV) each bind S-adenosyl-L-methionine.

This sequence belongs to the RNA methyltransferase TrmD family. In terms of assembly, homodimer.

The protein resides in the cytoplasm. The enzyme catalyses guanosine(37) in tRNA + S-adenosyl-L-methionine = N(1)-methylguanosine(37) in tRNA + S-adenosyl-L-homocysteine + H(+). Its function is as follows. Specifically methylates guanosine-37 in various tRNAs. The sequence is that of tRNA (guanine-N(1)-)-methyltransferase from Latilactobacillus sakei subsp. sakei (strain 23K) (Lactobacillus sakei subsp. sakei).